The primary structure comprises 421 residues: AP-3 complex subunit mu (421 aa).

The MHD domain maps to 178-420 (QNKIFFDIIE…TTKAGKFQVR (243 aa)).

It belongs to the adaptor complexes medium subunit family. Adaptor protein complex 3 (AP-3) is a heterotetramer composed of two large adaptins (delta-type subunit and beta-type subunit), a medium adaptin (mu-type subunit) and a small adaptin (sigma-type subunit).

It localises to the endosome membrane. In terms of biological role, part of the AP-3 complex, an adaptor-related complex which is essential for the compartmentalization of the endocytic pathway. The sequence is that of AP-3 complex subunit mu (apm3) from Dictyostelium discoideum (Social amoeba).